Consider the following 367-residue polypeptide: D-alanine--D-alanine ligase (367 aa).

One can recognise an ATP-grasp domain in the interval 139–340 (KLILKEKNIP…FSQVIDNMIS (202 aa)). 169–224 (KEVLEYPMIVKPARLGSSIGVKKVNDKCELEEAIETAFSFDDKVIVEKWIDSRELN) contacts ATP. 3 residues coordinate Mg(2+): aspartate 298, glutamate 311, and asparagine 313.

The protein belongs to the D-alanine--D-alanine ligase family. The cofactor is Mg(2+). It depends on Mn(2+) as a cofactor.

The protein localises to the cytoplasm. It catalyses the reaction 2 D-alanine + ATP = D-alanyl-D-alanine + ADP + phosphate + H(+). It functions in the pathway cell wall biogenesis; peptidoglycan biosynthesis. In terms of biological role, cell wall formation. In Thermosipho africanus (strain TCF52B), this protein is D-alanine--D-alanine ligase.